The chain runs to 163 residues: Photosystem II extrinsic protein V (163 aa).

Residues 1–26 form the signal peptide; it reads MLKKCVWLAVALCLCLWQFTMGTALA. Heme c contacts are provided by H67 and H118.

It belongs to the cytochrome c family. PsbV subfamily. As to quaternary structure, PSII is composed of 1 copy each of membrane proteins PsbA, PsbB, PsbC, PsbD, PsbE, PsbF, PsbH, PsbI, PsbJ, PsbK, PsbL, PsbM, PsbT, PsbX, PsbY, PsbZ, Psb30/Ycf12, peripheral proteins PsbO, CyanoQ (PsbQ), PsbU, PsbV and a large number of cofactors. It forms dimeric complexes. Requires heme c as cofactor.

The protein localises to the cellular thylakoid membrane. In terms of biological role, one of the extrinsic, lumenal subunits of photosystem II (PSII). PSII is a light-driven water plastoquinone oxidoreductase, using light energy to abstract electrons from H(2)O, generating a proton gradient subsequently used for ATP formation. The extrinsic proteins stabilize the structure of photosystem II oxygen-evolving complex (OEC), the ion environment of oxygen evolution and protect the OEC against heat-induced inactivation. Low-potential cytochrome c that plays a role in the OEC of PSII. The sequence is that of Photosystem II extrinsic protein V from Thermosynechococcus vestitus (strain NIES-2133 / IAM M-273 / BP-1).